The chain runs to 123 residues: Ribosome-binding factor A (123 aa).

This sequence belongs to the RbfA family. Monomer. Binds 30S ribosomal subunits, but not 50S ribosomal subunits or 70S ribosomes.

The protein resides in the cytoplasm. In terms of biological role, one of several proteins that assist in the late maturation steps of the functional core of the 30S ribosomal subunit. Associates with free 30S ribosomal subunits (but not with 30S subunits that are part of 70S ribosomes or polysomes). Required for efficient processing of 16S rRNA. May interact with the 5'-terminal helix region of 16S rRNA. In Cupriavidus metallidurans (strain ATCC 43123 / DSM 2839 / NBRC 102507 / CH34) (Ralstonia metallidurans), this protein is Ribosome-binding factor A.